Here is a 297-residue protein sequence, read N- to C-terminus: UBX domain-containing protein 1 (297 aa).

Ala2 bears the N-acetylalanine mark. Positions Ala2–His42 constitute a UBA domain. The tract at residues Trp38 to Asp212 is disordered. Residues His42–Leu52 are compositionally biased toward acidic residues. Positions Glu43–Ser297 are interaction with BRCA1. Composition is skewed to basic and acidic residues over residues Leu86–Lys122 and Lys137–Gln177. The stretch at Leu86–Lys172 forms a coiled coil. Residue Ser199 is modified to Phosphoserine. Ser200 carries the phosphoserine; by MAPK12 modification. 2 positions are modified to phosphothreonine: Thr207 and Thr229. The UBX domain maps to Arg209–Val291. At Ser270 the chain carries Phosphoserine.

As to quaternary structure, component of a complex required to couple retrotranslocation, ubiquitination and deglycosylation composed of NGLY1, SAKS1, AMFR, VCP and RAD23B. Interacts with HOMER2. Interacts directly with VCP. Interacts with BRCA1 and BARD1; interaction takes place when BRCA1 is not autoubiquitinated bur is strongly enhanced in the presence of autoubiquitinated BRCA1.

Its subcellular location is the cytoplasm. Its function is as follows. Ubiquitin-binding protein that interacts with the BRCA1-BARD1 heterodimer, and regulates its activity. Specifically binds 'Lys-6'-linked polyubiquitin chains. Interaction with autoubiquitinated BRCA1, leads to inhibit the E3 ubiquitin-protein ligase activity of the BRCA1-BARD1 heterodimer. Component of a complex required to couple deglycosylation and proteasome-mediated degradation of misfolded proteins in the endoplasmic reticulum that are retrotranslocated in the cytosol. The sequence is that of UBX domain-containing protein 1 (Ubxn1) from Rattus norvegicus (Rat).